The sequence spans 490 residues: Probable cytochrome P450 308a1 (490 aa).

Residue Cys431 participates in heme binding.

This sequence belongs to the cytochrome P450 family. It depends on heme as a cofactor.

The protein localises to the endoplasmic reticulum membrane. The protein resides in the microsome membrane. May be involved in the metabolism of insect hormones and in the breakdown of synthetic insecticides. The polypeptide is Probable cytochrome P450 308a1 (Cyp308a1) (Drosophila melanogaster (Fruit fly)).